A 360-amino-acid polypeptide reads, in one-letter code: Transcriptional coactivator MYCFIDRAFT_190109 (360 aa).

The 65-residue stretch at 3–67 (GMALNQLLAC…GFLHEPRPGQ (65 aa)) folds into the HTH iclR-type domain. The H-T-H motif DNA-binding region spans 33–52 (ARDVADLTGVPETQLCRVVR).

The protein localises to the nucleus. Transcriptional coactivator; part of the gene cluster that mediates the biosynthesis of an emodin derivative that may be involved in black Sigatoka disease of banana. With MYCFIDRAFT_198930, coregulates the production of the PKS8-1 cluster product. In Pseudocercospora fijiensis (strain CIRAD86) (Black leaf streak disease fungus), this protein is Transcriptional coactivator MYCFIDRAFT_190109.